A 61-amino-acid polypeptide reads, in one-letter code: UPF0434 protein Pmen_1615 (61 aa).

It belongs to the UPF0434 family.

This Ectopseudomonas mendocina (strain ymp) (Pseudomonas mendocina) protein is UPF0434 protein Pmen_1615.